Consider the following 326-residue polypeptide: Ketol-acid reductoisomerase (NADP(+)) (326 aa).

Positions 2-182 (AKIYGDEDAS…GFTRAGVIKT (181 aa)) constitute a KARI N-terminal Rossmann domain. NADP(+)-binding positions include 25-28 (YGSQ), Arg-48, Ser-53, and 83-86 (DEVQ). Residue His-108 is part of the active site. Gly-134 serves as a coordination point for NADP(+). In terms of domain architecture, KARI C-terminal knotted spans 183-325 (TFREEVETDL…ERLRKMMGFE (143 aa)). Mg(2+)-binding residues include Asp-191, Glu-195, Glu-227, and Glu-231. Position 252 (Ser-252) interacts with substrate.

Belongs to the ketol-acid reductoisomerase family. Mg(2+) serves as cofactor.

It carries out the reaction (2R)-2,3-dihydroxy-3-methylbutanoate + NADP(+) = (2S)-2-acetolactate + NADPH + H(+). The catalysed reaction is (2R,3R)-2,3-dihydroxy-3-methylpentanoate + NADP(+) = (S)-2-ethyl-2-hydroxy-3-oxobutanoate + NADPH + H(+). It functions in the pathway amino-acid biosynthesis; L-isoleucine biosynthesis; L-isoleucine from 2-oxobutanoate: step 2/4. The protein operates within amino-acid biosynthesis; L-valine biosynthesis; L-valine from pyruvate: step 2/4. Its function is as follows. Involved in the biosynthesis of branched-chain amino acids (BCAA). Catalyzes an alkyl-migration followed by a ketol-acid reduction of (S)-2-acetolactate (S2AL) to yield (R)-2,3-dihydroxy-isovalerate. In the isomerase reaction, S2AL is rearranged via a Mg-dependent methyl migration to produce 3-hydroxy-3-methyl-2-ketobutyrate (HMKB). In the reductase reaction, this 2-ketoacid undergoes a metal-dependent reduction by NADPH to yield (R)-2,3-dihydroxy-isovalerate. This chain is Ketol-acid reductoisomerase (NADP(+)), found in Methanopyrus kandleri (strain AV19 / DSM 6324 / JCM 9639 / NBRC 100938).